The chain runs to 150 residues: Large ribosomal subunit protein bL9 (150 aa).

It belongs to the bacterial ribosomal protein bL9 family.

In terms of biological role, binds to the 23S rRNA. This is Large ribosomal subunit protein bL9 from Yersinia enterocolitica serotype O:8 / biotype 1B (strain NCTC 13174 / 8081).